The primary structure comprises 106 residues: UPF0145 protein SCO3412 (106 aa).

It belongs to the UPF0145 family.

This Streptomyces coelicolor (strain ATCC BAA-471 / A3(2) / M145) protein is UPF0145 protein SCO3412.